A 1336-amino-acid chain; its full sequence is Mating factor M secretion protein mam1 (1336 aa).

A disordered region spans residues 1–29; the sequence is MHIHSDLSLPQFEHASIDPPSYSPQKSSF. Residues 1–91 lie on the Cytoplasmic side of the membrane; the sequence is MHIHSDLSLP…ELAGVSSWSD (91 aa). Residues 92 to 112 form a helical membrane-spanning segment; sequence FFYLFHFSDIPLIFGTLIFTC. In terms of domain architecture, ABC transmembrane type-1 1 spans 104–396; the sequence is IFGTLIFTCL…ILPAIPDLIK (293 aa). Residues 113–153 are Extracellular-facing; sequence LSAALEPLMTWTTGKVFDALSQYATSQITLGKMISLINFNS. A helical membrane pass occupies residues 154–174; that stretch reads LLITIFGLASCVFSFGVRFLW. Residues 175 to 250 lie on the Cytoplasmic side of the membrane; the sequence is QYLSAIAGKR…SCLIISFRYS (76 aa). A helical transmembrane segment spans residues 251-271; sequence WSLTLVVLASYPIIILVVGFI. At 272–778 the chain is on the extracellular side; it reads NSFLSSAYEK…KSIWKVKKLR (507 aa). Positions 433 to 668 constitute an ABC transporter 1 domain; sequence FRFDNVSFAY…EDFENNVSID (236 aa). N-linked (GlcNAc...) asparagine glycosylation is found at Asn-437 and Asn-454. Position 469 to 476 (469 to 476) interacts with ATP; sequence GPSGSGKS. 3 N-linked (GlcNAc...) asparagine glycosylation sites follow: Asn-536, Asn-664, and Asn-697. Residues 779 to 799 traverse the membrane as a helical segment; that stretch reads WFFLLGLLTSLIQGASVPIFA. Positions 781 to 1066 constitute an ABC transmembrane type-1 2 domain; it reads FLLGLLTSLI…CIMSLPNVSA (286 aa). Residues 800 to 897 lie on the Cytoplasmic side of the membrane; the sequence is YVISKCLNLF…ISDMRNMISS (98 aa). A helical transmembrane segment spans residues 898–918; the sequence is LIEEVFIAFTMAIIGIAWSFA. At 919–1336 the chain is on the extracellular side; that stretch reads TGWRLAAVLV…KLIHRGEWIE (418 aa). N-linked (GlcNAc...) asparagine glycosylation is found at Asn-1011, Asn-1063, and Asn-1120. The ABC transporter 2 domain occupies 1099–1331; it reads IEFDGVSFAY…HTHFWKLIHR (233 aa). ATP is bound at residue 1135–1142; that stretch reads GISGSGKS. N-linked (GlcNAc...) asparagine glycans are attached at residues Asn-1235 and Asn-1280.

It belongs to the ABC transporter superfamily. Alpha-factor sex pheromone exporter (TC 3.A.1.206) family.

The protein localises to the membrane. In terms of biological role, required in S.pombe M (minus) cells for production of M-factor pheromone. Involved in the transport of the farnesyl-derivation of the M-factor pheromone. The polypeptide is Mating factor M secretion protein mam1 (mam1) (Schizosaccharomyces pombe (strain 972 / ATCC 24843) (Fission yeast)).